The primary structure comprises 295 residues: Sperm acrosome membrane-associated protein 1 (295 aa).

Residues 1–29 (MSPGGAGCSAGLLLTVGWLLLAGLQSTCG) form the signal peptide. Residues 30-220 (INVTAVQDPS…SRPDTDAVLV (191 aa)) lie on the Extracellular side of the membrane. The interval 39 to 71 (SLVSEGENEGEEEAENDSEVENEPQAEAEQDVS) is disordered. Over residues 44 to 68 (GENEGEEEAENDSEVENEPQAEAEQ) the composition is skewed to acidic residues. N-linked (GlcNAc...) asparagine glycosylation is present at Asn72. A helical membrane pass occupies residues 221 to 241 (FVLTIGVIICIFVIFVLIFII). At 242–295 (VNWATVKDFWASKASTTEIQSELSSMKYKDSTSLDQSPTEIPGHEDDALSEWNE) the chain is on the cytoplasmic side. Ser256 is subject to Phosphoserine. The tract at residues 263–295 (ELSSMKYKDSTSLDQSPTEIPGHEDDALSEWNE) is disordered. The residue at position 269 (Tyr269) is a Phosphotyrosine. Phosphoserine occurs at positions 278 and 291.

In terms of assembly, interacts with CYLC1; the interaction may be relevant for proper acrosome attachment to the nuclear envelope. In terms of processing, N-glycosylated. As to expression, detected in spermatozoa (at protein level).

It localises to the cytoplasmic vesicle. The protein localises to the secretory vesicle. It is found in the acrosome inner membrane. Functionally, plays a role in acrosome expansion and establishment of normal sperm morphology during spermatogenesis. Important for male fertility. The polypeptide is Sperm acrosome membrane-associated protein 1 (Sus scrofa (Pig)).